The primary structure comprises 82 residues: Small ribosomal subunit protein bS16c (82 aa).

Belongs to the bacterial ribosomal protein bS16 family.

It is found in the plastid. Its subcellular location is the chloroplast. This is Small ribosomal subunit protein bS16c from Pyropia yezoensis (Susabi-nori).